A 1504-amino-acid chain; its full sequence is NAC-alpha domain-containing protein 1 (1504 aa).

10 disordered regions span residues 127–150 (KPGARPQPEGASWDAGPSGAASAW), 208–261 (DREG…HGPH), 315–356 (PSDW…SSWS), 396–436 (LPQE…STSA), 460–525 (DTSA…TNSQ), 539–565 (GLESEAMRTPPDQQAAPGPQVEETPTV), 701–812 (VLPP…EEGV), 834–1064 (DLES…LPVA), 1099–1366 (PFQH…AMSK), and 1430–1467 (PSEPSALVPELSPGPRVRPECEEQEEEDEEVEEAGLEP). Positions 342–354 (SSESSLSADSSSS) are enriched in low complexity. Residues 398–407 (QEEEEDEEDV) show a composition bias toward acidic residues. 2 stretches are compositionally biased toward low complexity: residues 408–422 (AATAAAAAPAAATPD) and 462–475 (SAASSDSDSASYAG). The span at 510–525 (STPQTSEQEICLTNSQ) shows a compositional bias: polar residues. A compositionally biased stretch (polar residues) spans 775–792 (PQESPTASSLTLQSSHPT). A compositionally biased stretch (low complexity) spans 930 to 939 (PPASNQAQQN). The segment covering 958–968 (STLSTKTSEPT) has biased composition (polar residues). Over residues 989–1005 (EAHDGVKTHSPQREALR) the composition is skewed to basic and acidic residues. A Phosphoserine modification is found at serine 998. Positions 1016–1031 (SPGQGNGPKSATSQGA) are enriched in polar residues. Pro residues predominate over residues 1159-1171 (PGPPDPCLCPPPQ). Residues 1213–1222 (VSLSPHSTLN) are compositionally biased toward polar residues. Serine 1268 is modified (phosphoserine). Residues 1354-1419 (SRSEKKARKA…AKIEDLSQQV (66 aa)) enclose the NAC-A/B domain. Acidic residues predominate over residues 1451 to 1464 (EEQEEEDEEVEEAG).

This sequence belongs to the NAC-alpha family.

Its subcellular location is the cytoplasm. It localises to the nucleus. May prevent inappropriate targeting of non-secretory polypeptides to the endoplasmic reticulum (ER). May bind to nascent polypeptide chains as they emerge from the ribosome and block their interaction with the signal recognition particle (SRP), which normally targets nascent secretory peptides to the ER. May also reduce the inherent affinity of ribosomes for protein translocation sites in the ER membrane (M sites). The protein is NAC-alpha domain-containing protein 1 (Nacad) of Mus musculus (Mouse).